We begin with the raw amino-acid sequence, 122 residues long: MNKLNKQNIINHVNNLQLKKSVPNFQVGDTVSVSIKIADEKRTRIQKFDGLVLRRKGSGLSETFIVRKESSGVGVEKNFHVHNPNIEIELKRKGKVRRAYISYMRERSGKSARIKEKVVNTK.

The protein belongs to the bacterial ribosomal protein bL19 family.

Its function is as follows. This protein is located at the 30S-50S ribosomal subunit interface and may play a role in the structure and function of the aminoacyl-tRNA binding site. The protein is Large ribosomal subunit protein bL19 of Mycoplasmoides gallisepticum (strain R(low / passage 15 / clone 2)) (Mycoplasma gallisepticum).